Here is a 148-residue protein sequence, read N- to C-terminus: Large ribosomal subunit protein bL9 (148 aa).

It belongs to the bacterial ribosomal protein bL9 family.

Functionally, binds to the 23S rRNA. In Pseudomonas syringae pv. tomato (strain ATCC BAA-871 / DC3000), this protein is Large ribosomal subunit protein bL9.